A 358-amino-acid chain; its full sequence is Nuclear receptor subfamily 1 group I member 3 (358 aa).

Positions 18–93 (PRNCVVCGDR…VGMRKDMILS (76 aa)) form a DNA-binding region, nuclear receptor. Residues 21–41 (CVVCGDRATGYHFHALTCEGC) form an NR C4-type zinc finger. Position 48 is a phosphothreonine; by PKC (T48). An NR C4-type zinc finger spans residues 57–81 (CPFAGRCEVSKAQRRHCPACRLQKC). An NR LBD domain is found at 119-358 (QQKELIQTLL…MMPLLGEICS (240 aa)).

The protein belongs to the nuclear hormone receptor family. NR1 subfamily. In terms of assembly, heterodimer of NR1I3 and RXR. Interacts with PSMC4. Interacts with ECT2. Directly interacts with DNAJC7; this complex may also include HSP90. Interacts with CRY1. Interacts with CRY2 in a ligand-dependent manner. In terms of processing, phosphorylated at Thr-48 by PKC, dephosphorylation of Thr-48 is required for nuclear translocation and activation.

It localises to the nucleus. It is found in the cytoplasm. The protein localises to the cytoskeleton. Functionally, binds and transactivates the retinoic acid response elements that control expression of the retinoic acid receptor beta 2 and alcohol dehydrogenase 3 genes. Transactivates both the phenobarbital responsive element module of the human CYP2B6 gene and the CYP3A4 xenobiotic response element. The sequence is that of Nuclear receptor subfamily 1 group I member 3 (Nr1i3) from Rattus norvegicus (Rat).